A 653-amino-acid chain; its full sequence is MDRGVLPQAIALLLAVCSFGPTAGLAEGVQCDLQPVDPKVTYTTSQVSEGCVAHVPNATVGVHILFLEFSKEVSTLELTVQMTNPNGARPQEVLLILSVNKNIHLTLQVPEIPLHLAYDSKLVFLQEAPKAVITELPPSTTKNQLFLWANTKGSIISAAELDNPQSILLRLDQAPTSPSRCTLEPRKDMGHTLEWKSHTQASVLGCHLEGVTGHKEAHILRVLPGSEAWPRTVTVEVELSCALRDPEAVLILQGPPYVSWLIDANHNVKAWTTGEYSFKIFPGSNIQGVNLPDTRQGLLEEARKLNASVIASFVELPLASVISLQDRSCGSGLQPSPTTVQITPPGEGCNQDLLLSLIQPRCSDDVMTLVLRKDLISTLGCTITSLTFWDPSCQAEDTDDKFVLRGTYSSCGMKVAENVVISNEVVVNLLSSSSPQRKQVQCINLDSLSFQLGLYLSPHFLQASNTIELGQQGFVQVSMSPSIPELMTQLDSCQLNLGPDVEMVDLIQNQEAKSSCVSLLSPSPGGDMRFSFLLRGYVVPMPTAGILSCTVALRPRTWSLDVHKTASTRLNIVSPGLPDKGLVLPAVLGITFGAFLIGALLTAALWYIHSHTRHPGKREPVVAVAAPASSESSSTNHSIGSTQSTPCSTSSMA.

The first 24 residues, 1–24 (MDRGVLPQAIALLLAVCSFGPTAG), serve as a signal peptide directing secretion. The Extracellular portion of the chain corresponds to 25 to 581 (LAEGVQCDLQ…IVSPGLPDKG (557 aa)). Positions 27–44 (EGVQCDLQPVDPKVTYTT) are OR1, N-terminal part. The segment at 27 to 336 (EGVQCDLQPV…RSCGSGLQPS (310 aa)) is required for interaction with GDF2. 7 disulfide bridges follow: cysteine 31–cysteine 206, cysteine 51–cysteine 181, cysteine 241–cysteine 329, cysteine 349–cysteine 381, cysteine 362–cysteine 442, cysteine 393–cysteine 411, and cysteine 493–cysteine 549. Residues 45–198 (SQVSEGCVAH…MGHTLEWKSH (154 aa)) are OR2. N-linked (GlcNAc...) asparagine glycosylation is present at asparagine 57. The segment at 199 to 329 (TQASVLGCHL…SVISLQDRSC (131 aa)) is OR1, C-terminal part. Residues 269 to 281 (KAWTTGEYSFKIF) are essential for interaction with GDF2. Asparagine 306 carries an N-linked (GlcNAc...) asparagine glycan. Residues 362 to 512 (CSDDVMTLVL…MVDLIQNQEA (151 aa)) form the ZP domain. A helical transmembrane segment spans residues 582-606 (LVLPAVLGITFGAFLIGALLTAALW). The Cytoplasmic portion of the chain corresponds to 607 to 653 (YIHSHTRHPGKREPVVAVAAPASSESSSTNHSIGSTQSTPCSTSSMA). Residues 625-634 (AAPASSESSS) show a composition bias toward low complexity. Residues 625–653 (AAPASSESSSTNHSIGSTQSTPCSTSSMA) are disordered. The segment covering 635-653 (TNHSIGSTQSTPCSTSSMA) has biased composition (polar residues). A phosphoserine; by TGFBR1 mark is found at serine 641 and serine 644.

As to quaternary structure, homodimer; disulfide-linked. Forms a heteromeric complex with the signaling receptors for transforming growth factor-beta: TGFBR1 and/or TGFBR2. It is able to bind TGFB1 and TGFB2 with high affinity, but not TGFB3. Interacts with GDF2, forming a heterotetramer with a 2:2 stoichiometry. Interacts with ACVRL1. Can form a heteromeric complex with GDF2 and ACVRL1. Interacts with BMP10. Interacts with DYNLT4. Interacts with ARRB2.

Its subcellular location is the cell membrane. Functionally, vascular endothelium glycoprotein that plays an important role in the regulation of angiogenesis. Required for normal structure and integrity of adult vasculature. Regulates the migration of vascular endothelial cells. Required for normal extraembryonic angiogenesis and for embryonic heart development. May regulate endothelial cell shape changes in response to blood flow, which drive vascular remodeling and establishment of normal vascular morphology during angiogenesis. May play a role in the binding of endothelial cells to integrins. Acts as a TGF-beta coreceptor and is involved in the TGF-beta/BMP signaling cascade that ultimately leads to the activation of SMAD transcription factors. Required for GDF2/BMP9 signaling through SMAD1 in endothelial cells and modulates TGFB1 signaling through SMAD3. The chain is Endoglin (ENG) from Sus scrofa (Pig).